A 363-amino-acid polypeptide reads, in one-letter code: p21-activated protein kinase-interacting protein 1-like (363 aa).

WD repeat units lie at residues 38–75 (AHTA…EHGA), 78–116 (HHNG…CQQT), 119–158 (AHKG…SAFI), 200–238 (NNPK…CVCE), and 241–282 (AHEN…VQTS). The tract at residues 309-363 (KEKSNTAVTASAVKDCDRPKKKKAQNETTDKEASETQVVHKKRKPETKQKKKKPS) is disordered. A compositionally biased stretch (basic and acidic residues) spans 322–342 (KDCDRPKKKKAQNETTDKEAS). Over residues 347–363 (VHKKRKPETKQKKKKPS) the composition is skewed to basic residues.

Its subcellular location is the nucleus. The protein resides in the nucleolus. Negatively regulates the PAK1 kinase. PAK1 is a member of the PAK kinase family, which has been shown to play a positive role in the regulation of signaling pathways involving MAPK8 and RELA. PAK1 exists as an inactive homodimer, which is activated by binding of small GTPases such as CDC42 to an N-terminal regulatory domain. PAK1IP1 also binds to the N-terminus of PAK1, and inhibits the specific activation of PAK1 by CDC42. May be involved in ribosomal large subunit assembly. The polypeptide is p21-activated protein kinase-interacting protein 1-like (pak1ip1) (Xenopus laevis (African clawed frog)).